The sequence spans 394 residues: Phosphopentomutase (394 aa).

Residues aspartate 13, aspartate 286, histidine 291, aspartate 327, histidine 328, and histidine 339 each contribute to the Mn(2+) site.

It belongs to the phosphopentomutase family. Mn(2+) is required as a cofactor.

The protein resides in the cytoplasm. The catalysed reaction is 2-deoxy-alpha-D-ribose 1-phosphate = 2-deoxy-D-ribose 5-phosphate. It catalyses the reaction alpha-D-ribose 1-phosphate = D-ribose 5-phosphate. The protein operates within carbohydrate degradation; 2-deoxy-D-ribose 1-phosphate degradation; D-glyceraldehyde 3-phosphate and acetaldehyde from 2-deoxy-alpha-D-ribose 1-phosphate: step 1/2. Its function is as follows. Isomerase that catalyzes the conversion of deoxy-ribose 1-phosphate (dRib-1-P) and ribose 1-phosphate (Rib-1-P) to deoxy-ribose 5-phosphate (dRib-5-P) and ribose 5-phosphate (Rib-5-P), respectively. The polypeptide is Phosphopentomutase (Bacillus anthracis (strain A0248)).